The following is a 478-amino-acid chain: Histidine--tRNA ligase (478 aa).

Belongs to the class-II aminoacyl-tRNA synthetase family. Homodimer.

Its subcellular location is the cytoplasm. The enzyme catalyses tRNA(His) + L-histidine + ATP = L-histidyl-tRNA(His) + AMP + diphosphate + H(+). The sequence is that of Histidine--tRNA ligase (hisS) from Xanthomonas axonopodis pv. citri (strain 306).